A 99-amino-acid chain; its full sequence is Malonate decarboxylase acyl carrier protein (99 aa).

S25 carries the O-(phosphoribosyl dephospho-coenzyme A)serine modification.

It belongs to the MdcC family. In terms of processing, covalently binds the prosthetic group of malonate decarboxylase.

Its subcellular location is the cytoplasm. Its function is as follows. Subunit of malonate decarboxylase, it is an acyl carrier protein to which acetyl and malonyl thioester residues are bound via a 2'-(5''-phosphoribosyl)-3'-dephospho-CoA prosthetic group and turn over during the catalytic mechanism. This is Malonate decarboxylase acyl carrier protein from Pseudomonas aeruginosa (strain UCBPP-PA14).